Consider the following 262-residue polypeptide: Thiazole synthase (262 aa).

Lysine 97 serves as the catalytic Schiff-base intermediate with DXP. Residues glycine 158, 185-186, and 207-208 each bind 1-deoxy-D-xylulose 5-phosphate; these read AG and NT. The tract at residues 243-262 is disordered; it reads DKAQASTPTVGQPFWHSAEY.

It belongs to the ThiG family. In terms of assembly, homotetramer. Forms heterodimers with either ThiH or ThiS.

It localises to the cytoplasm. It carries out the reaction [ThiS sulfur-carrier protein]-C-terminal-Gly-aminoethanethioate + 2-iminoacetate + 1-deoxy-D-xylulose 5-phosphate = [ThiS sulfur-carrier protein]-C-terminal Gly-Gly + 2-[(2R,5Z)-2-carboxy-4-methylthiazol-5(2H)-ylidene]ethyl phosphate + 2 H2O + H(+). Its pathway is cofactor biosynthesis; thiamine diphosphate biosynthesis. Catalyzes the rearrangement of 1-deoxy-D-xylulose 5-phosphate (DXP) to produce the thiazole phosphate moiety of thiamine. Sulfur is provided by the thiocarboxylate moiety of the carrier protein ThiS. In vitro, sulfur can be provided by H(2)S. This is Thiazole synthase from Neisseria meningitidis serogroup A / serotype 4A (strain DSM 15465 / Z2491).